A 209-amino-acid polypeptide reads, in one-letter code: Guanylate kinase (209 aa).

One can recognise a Guanylate kinase-like domain in the interval 7–185 (GNLYIVAAPS…AAMELQSIVI (179 aa)). 14 to 21 (APSGGGKT) provides a ligand contact to ATP.

It belongs to the guanylate kinase family.

It is found in the cytoplasm. It catalyses the reaction GMP + ATP = GDP + ADP. In terms of biological role, essential for recycling GMP and indirectly, cGMP. In Legionella pneumophila (strain Paris), this protein is Guanylate kinase.